The primary structure comprises 938 residues: Ankyrin repeat and LEM domain-containing protein 2 (938 aa).

The Lumenal portion of the chain corresponds to 1-12 (MLWPRLAAAEWA). Residues 13-32 (ALAWELLGASVLLIAVRWLV) traverse the membrane as a helical; Signal-anchor for type III membrane protein segment. The Cytoplasmic segment spans residues 33-938 (RRLGPRPGGL…MARLAELAAL (906 aa)). Residues 69-113 (LARLKLLNPDDLREEIVKAGLKCGPITSTTRFIFEKKLAQALLEQ) form the LEM domain. Phosphoserine is present on residues S259 and S268. The ANK repeat unit spans residues 411-440 (GYDTPLHFACKFGNADVVNVLSSHHLIVKN). Phosphoserine occurs at positions 488, 496, 512, and 528. Basic and acidic residues predominate over residues 609-627 (GKKAQQETGEREASCRDKA). The interval 609-636 (GKKAQQETGEREASCRDKATTSGSNSIS) is disordered. Residues S662, S804, S896, and S914 each carry the phosphoserine modification. The interval 870–924 (RQSWPSPAVKGRFKSQLPDLSGPHSYSPGRNSVAGSNPAKPGLGSPGRYSPVHGS) is disordered.

It belongs to the ANKLE2 family. Interacts with BAF/BANF1. Interacts with protein phosphatase 2A (PP2A) components PPP2C (PPP2CA or PPP2CB) and PPP2R1A. As to quaternary structure, (Microbial infection) May interact with non-structural protein 4A/NS4A from Zika virus strains Mr-766 or French Polynesia 10087PF/2013; the interaction may inhibit ANKLE2 function and contribute to defects in brain development, such as microcephaly.

It localises to the endoplasmic reticulum membrane. In terms of biological role, involved in mitotic nuclear envelope reassembly by promoting dephosphorylation of BAF/BANF1 during mitotic exit. Coordinates the control of BAF/BANF1 dephosphorylation by inhibiting VRK1 kinase and promoting dephosphorylation of BAF/BANF1 by protein phosphatase 2A (PP2A), thereby facilitating nuclear envelope assembly. May regulate nuclear localization of VRK1 in non-dividing cells. It is unclear whether it acts as a real PP2A regulatory subunit or whether it is involved in recruitment of the PP2A complex. Involved in brain development. This is Ankyrin repeat and LEM domain-containing protein 2 (ANKLE2) from Homo sapiens (Human).